The chain runs to 183 residues: Putative 3-methyladenine DNA glycosylase (183 aa).

This sequence belongs to the DNA glycosylase MPG family.

This is Putative 3-methyladenine DNA glycosylase from Legionella pneumophila subsp. pneumophila (strain Philadelphia 1 / ATCC 33152 / DSM 7513).